The primary structure comprises 459 residues: Flavin-containing monooxygenase FMO GS-OX5 (459 aa).

Position 17 to 22 (Gly-17 to Gly-22) interacts with FAD. Gly-212–Gly-217 contacts NADP(+).

Belongs to the FMO family.

The enzyme catalyses a (Z)-omega-(methylsulfanyl)-N-sulfo-alkylhydroximate S-glucoside + NADPH + O2 + H(+) = a (Z)-omega-(methylsulfinyl)-alkyl-glucosinolate + NADP(+) + H2O. Its function is as follows. Catalyzes the conversion of methylthioalkyl glucosinolates into methylsulfinylalkyl glucosinolates. Specific for 8-methylthiooctyl (8-MTO) glucosinolates. This chain is Flavin-containing monooxygenase FMO GS-OX5 (FMOGS-OX5), found in Arabidopsis thaliana (Mouse-ear cress).